The primary structure comprises 258 residues: HVA22-like protein j (258 aa).

The interval 153 to 258 (AANQPPTERN…RSNSRTQPAA (106 aa)) is disordered. The segment covering 156 to 169 (QPPTERNVNMNAQS) has biased composition (polar residues). Residues 206–215 (WPPPTPPPTP) show a composition bias toward pro residues.

It belongs to the DP1 family.

The polypeptide is HVA22-like protein j (HVA22J) (Arabidopsis thaliana (Mouse-ear cress)).